The chain runs to 220 residues: Deoxyribose-phosphate aldolase (220 aa).

Asp-89 (proton donor/acceptor) is an active-site residue. The active-site Schiff-base intermediate with acetaldehyde is the Lys-152. Lys-181 (proton donor/acceptor) is an active-site residue.

The protein belongs to the DeoC/FbaB aldolase family. DeoC type 1 subfamily.

The protein resides in the cytoplasm. The enzyme catalyses 2-deoxy-D-ribose 5-phosphate = D-glyceraldehyde 3-phosphate + acetaldehyde. It participates in carbohydrate degradation; 2-deoxy-D-ribose 1-phosphate degradation; D-glyceraldehyde 3-phosphate and acetaldehyde from 2-deoxy-alpha-D-ribose 1-phosphate: step 2/2. In terms of biological role, catalyzes a reversible aldol reaction between acetaldehyde and D-glyceraldehyde 3-phosphate to generate 2-deoxy-D-ribose 5-phosphate. The polypeptide is Deoxyribose-phosphate aldolase (Enterococcus faecalis (strain ATCC 700802 / V583)).